A 646-amino-acid chain; its full sequence is UvrABC system protein B (646 aa).

Residues 25 to 412 (NGIKAGMREQ…QNIVEQIIRP (388 aa)) form the Helicase ATP-binding domain. Position 38 to 45 (38 to 45 (GVTGSGKT)) interacts with ATP. A Beta-hairpin motif is present at residues 91–114 (YYDFYQPEAYIPQTDTYIDKEASI). One can recognise a Helicase C-terminal domain in the interval 428–594 (QVDDLLSEIR…STRRTLREEE (167 aa)). The 36-residue stretch at 611–646 (ELIIKDLEAEMRDAARNLEFERAARIRDRIMSLKSN) folds into the UVR domain.

The protein belongs to the UvrB family. In terms of assembly, forms a heterotetramer with UvrA during the search for lesions. Interacts with UvrC in an incision complex.

It localises to the cytoplasm. Its function is as follows. The UvrABC repair system catalyzes the recognition and processing of DNA lesions. A damage recognition complex composed of 2 UvrA and 2 UvrB subunits scans DNA for abnormalities. Upon binding of the UvrA(2)B(2) complex to a putative damaged site, the DNA wraps around one UvrB monomer. DNA wrap is dependent on ATP binding by UvrB and probably causes local melting of the DNA helix, facilitating insertion of UvrB beta-hairpin between the DNA strands. Then UvrB probes one DNA strand for the presence of a lesion. If a lesion is found the UvrA subunits dissociate and the UvrB-DNA preincision complex is formed. This complex is subsequently bound by UvrC and the second UvrB is released. If no lesion is found, the DNA wraps around the other UvrB subunit that will check the other stand for damage. The protein is UvrABC system protein B of Methanothermobacter thermautotrophicus (strain ATCC 29096 / DSM 1053 / JCM 10044 / NBRC 100330 / Delta H) (Methanobacterium thermoautotrophicum).